The chain runs to 214 residues: RING-H2 finger protein ATL67 (214 aa).

Residues 33–53 (LGFGYSIAIALGFLVLLSTVL) form a helical membrane-spanning segment. Residues 138 to 180 (CSICLCEYKEAEMLRMMPECKHYFHLCCLDAWLKLNGSCPVCR) form an RING-type; atypical zinc finger.

This sequence belongs to the RING-type zinc finger family. ATL subfamily.

It is found in the membrane. It carries out the reaction S-ubiquitinyl-[E2 ubiquitin-conjugating enzyme]-L-cysteine + [acceptor protein]-L-lysine = [E2 ubiquitin-conjugating enzyme]-L-cysteine + N(6)-ubiquitinyl-[acceptor protein]-L-lysine.. The protein operates within protein modification; protein ubiquitination. This chain is RING-H2 finger protein ATL67 (ATL67), found in Arabidopsis thaliana (Mouse-ear cress).